The primary structure comprises 288 residues: NAD(P)H-hydrate epimerase (288 aa).

A mitochondrion-targeting transit peptide spans 1 to 59 (MSGLRALLGLGLPVAGSRLPRVRVQAGACRARPTWWGPQRLISGGRGDVEGMASSAVKY). One can recognise a YjeF N-terminal domain in the interval 65 to 275 (AQAVDQELFN…ALEKKYQLNL (211 aa)). 119-123 (NNGGD) is a binding site for (6S)-NADPHX. K(+) is bound at residue Asn120. Lys144 carries the post-translational modification N6-succinyllysine. Asp185 is a K(+) binding site. Residues 189–195 (GFSFKGE) and Asp218 each bind (6S)-NADPHX. Ser221 lines the K(+) pocket.

It belongs to the NnrE/AIBP family. As to quaternary structure, homodimer. Interacts with APOA1 and APOA2. It depends on K(+) as a cofactor. Undergoes physiological phosphorylation during sperm capacitation, downstream to PKA activation.

It localises to the mitochondrion. The protein resides in the secreted. It catalyses the reaction (6R)-NADHX = (6S)-NADHX. The catalysed reaction is (6R)-NADPHX = (6S)-NADPHX. Catalyzes the epimerization of the S- and R-forms of NAD(P)HX, a damaged form of NAD(P)H that is a result of enzymatic or heat-dependent hydration. This is a prerequisite for the S-specific NAD(P)H-hydrate dehydratase to allow the repair of both epimers of NAD(P)HX. Accelerates cholesterol efflux from endothelial cells to high-density lipoprotein (HDL) and thereby regulates angiogenesis. In Sus scrofa (Pig), this protein is NAD(P)H-hydrate epimerase.